Consider the following 127-residue polypeptide: Aspartate 1-decarboxylase (127 aa).

Ser25 serves as the catalytic Schiff-base intermediate with substrate; via pyruvic acid. At Ser25 the chain carries Pyruvic acid (Ser). Residue Thr57 participates in substrate binding. The active-site Proton donor is Tyr58. Residue 73 to 75 (GAA) coordinates substrate.

This sequence belongs to the PanD family. Heterooctamer of four alpha and four beta subunits. The cofactor is pyruvate. Is synthesized initially as an inactive proenzyme, which is activated by self-cleavage at a specific serine bond to produce a beta-subunit with a hydroxyl group at its C-terminus and an alpha-subunit with a pyruvoyl group at its N-terminus.

The protein localises to the cytoplasm. The catalysed reaction is L-aspartate + H(+) = beta-alanine + CO2. It functions in the pathway cofactor biosynthesis; (R)-pantothenate biosynthesis; beta-alanine from L-aspartate: step 1/1. Catalyzes the pyruvoyl-dependent decarboxylation of aspartate to produce beta-alanine. The polypeptide is Aspartate 1-decarboxylase (Listeria monocytogenes serotype 4b (strain F2365)).